The following is a 413-amino-acid chain: Multifunctional CCA protein (413 aa).

Residues G8 and R11 each coordinate ATP. G8 and R11 together coordinate CTP. Residues D21 and D23 each contribute to the Mg(2+) site. The ATP site is built by R91, R137, and R140. CTP-binding residues include R91, R137, and R140. The HD domain occupies 228–329 (TGVHTLMTLS…VKLFDAIDAW (102 aa)).

It belongs to the tRNA nucleotidyltransferase/poly(A) polymerase family. Bacterial CCA-adding enzyme type 1 subfamily. In terms of assembly, monomer. Can also form homodimers and oligomers. Mg(2+) serves as cofactor. Requires Ni(2+) as cofactor.

The enzyme catalyses a tRNA precursor + 2 CTP + ATP = a tRNA with a 3' CCA end + 3 diphosphate. It catalyses the reaction a tRNA with a 3' CCA end + 2 CTP + ATP = a tRNA with a 3' CCACCA end + 3 diphosphate. Functionally, catalyzes the addition and repair of the essential 3'-terminal CCA sequence in tRNAs without using a nucleic acid template. Adds these three nucleotides in the order of C, C, and A to the tRNA nucleotide-73, using CTP and ATP as substrates and producing inorganic pyrophosphate. tRNA 3'-terminal CCA addition is required both for tRNA processing and repair. Also involved in tRNA surveillance by mediating tandem CCA addition to generate a CCACCA at the 3' terminus of unstable tRNAs. While stable tRNAs receive only 3'-terminal CCA, unstable tRNAs are marked with CCACCA and rapidly degraded. The protein is Multifunctional CCA protein of Salmonella choleraesuis (strain SC-B67).